The following is a 470-amino-acid chain: NADH-quinone oxidoreductase subunit D (470 aa).

The span at 1–18 (MTPSTSTPHTSTAPHTST) shows a compositional bias: low complexity. The segment at 1 to 37 (MTPSTSTPHTSTAPHTSTGQSTDGAAQPGDGSSAYEA) is disordered.

The protein belongs to the complex I 49 kDa subunit family. As to quaternary structure, NDH-1 is composed of 14 different subunits. Subunits NuoB, C, D, E, F, and G constitute the peripheral sector of the complex.

The protein localises to the cell membrane. It catalyses the reaction a quinone + NADH + 5 H(+)(in) = a quinol + NAD(+) + 4 H(+)(out). NDH-1 shuttles electrons from NADH, via FMN and iron-sulfur (Fe-S) centers, to quinones in the respiratory chain. The immediate electron acceptor for the enzyme in this species is believed to be a menaquinone. Couples the redox reaction to proton translocation (for every two electrons transferred, four hydrogen ions are translocated across the cytoplasmic membrane), and thus conserves the redox energy in a proton gradient. The polypeptide is NADH-quinone oxidoreductase subunit D (Frankia alni (strain DSM 45986 / CECT 9034 / ACN14a)).